Consider the following 308-residue polypeptide: Oxygen-dependent coproporphyrinogen-III oxidase (308 aa).

Ser-92 is a binding site for substrate. The a divalent metal cation site is built by His-96 and His-106. The active-site Proton donor is His-106. 108 to 110 is a binding site for substrate; that stretch reads NVR. A divalent metal cation is bound by residues His-145 and His-175. Positions 240 to 275 are important for dimerization; that stretch reads YVEFNLVWDRGTLFGLQTGGRTESILMSMPPLVRWE. 258-260 is a binding site for substrate; it reads GGR.

This sequence belongs to the aerobic coproporphyrinogen-III oxidase family. As to quaternary structure, homodimer. Requires a divalent metal cation as cofactor.

The protein resides in the cytoplasm. The catalysed reaction is coproporphyrinogen III + O2 + 2 H(+) = protoporphyrinogen IX + 2 CO2 + 2 H2O. Its pathway is porphyrin-containing compound metabolism; protoporphyrin-IX biosynthesis; protoporphyrinogen-IX from coproporphyrinogen-III (O2 route): step 1/1. Involved in the heme biosynthesis. Catalyzes the aerobic oxidative decarboxylation of propionate groups of rings A and B of coproporphyrinogen-III to yield the vinyl groups in protoporphyrinogen-IX. The polypeptide is Oxygen-dependent coproporphyrinogen-III oxidase (Salmonella paratyphi A (strain ATCC 9150 / SARB42)).